The sequence spans 739 residues: Potassium transporter 26 (739 aa).

Over 1–81 the chain is Cytoplasmic; it reads MEYHHRPHSP…RQVALLSFQS (81 aa). Residues 82–102 form a helical membrane-spanning segment; the sequence is LGVVYGDLGTSPLYVFSSISL. Topologically, residues 103–112 are extracellular; sequence DDPGEADFVG. The chain crosses the membrane as a helical span at residues 113-133; the sequence is ILSIILWTFTMICLVKYVFIV. The Cytoplasmic segment spans residues 134–198; it reads LKADDHGEGG…KFLEQSTKWQ (65 aa). The chain crosses the membrane as a helical span at residues 199–219; sequence AVITYIVLAGTCMVLGDGALT. Residues 220–236 are Extracellular-facing; that stretch reads PAISVLSAVQGIQSRSS. The helical transmembrane segment at 237–257 threads the bilayer; it reads SITQAHVVLLSVIILFILFFF. At 258–268 the chain is on the cytoplasmic side; that stretch reads QKHGTSKVSFT. Residues 269–289 form a helical membrane-spanning segment; that stretch reads FSPIMILWFTFVAFIGLYNII. The Extracellular segment spans residues 290–318; that stretch reads KHYPPILKAVSPHYIIIYFIRNKRAAWET. A helical membrane pass occupies residues 319-339; it reads LGAIVLCITGAEAMFADLGHF. Over 340–347 the chain is Cytoplasmic; that stretch reads NKSSIQMA. Residues 348 to 368 traverse the membrane as a helical segment; that stretch reads FSVIVYPSMILAYAGQAAFLV. Over 369–385 the chain is Extracellular; it reads KNPSKLSTTFYSSTPEP. A helical transmembrane segment spans residues 386-406; that stretch reads LFWPMFIIATLAAIVASQALI. The Cytoplasmic segment spans residues 407 to 437; it reads SASFSIIRQSIALGCFPRVTMKHTSGKHEGQ. A helical membrane pass occupies residues 438–458; that stretch reads VYSPEINYFLMVACILITVGF. Topologically, residues 459–469 are extracellular; it reads KGGPEIGQAFG. Residues 470–490 form a helical membrane-spanning segment; the sequence is VAVIFVMLFTTNLMTVVMLII. At 491-494 the chain is on the cytoplasmic side; that stretch reads WESN. A helical transmembrane segment spans residues 495–515; the sequence is IALASLFFVFFFSIEGIYMTS. At 516 to 519 the chain is on the extracellular side; the sequence is LMNK. A helical membrane pass occupies residues 520-540; the sequence is ILQGGWVPFAITAFFLIITLS. Residues 541–739 are Cytoplasmic-facing; the sequence is WTYGRSKKGE…TLQVGMLYEI (199 aa).

It belongs to the HAK/KUP transporter (TC 2.A.72.3) family.

The protein localises to the membrane. In terms of biological role, high-affinity potassium transporter. This chain is Potassium transporter 26 (HAK26), found in Oryza sativa subsp. japonica (Rice).